The primary structure comprises 353 residues: UPF0283 membrane protein YcjF (353 aa).

The segment covering 1 to 19 has biased composition (basic and acidic residues); it reads MSEPLKPRIDFAEPLKEES. Residues 1 to 29 form a disordered region; sequence MSEPLKPRIDFAEPLKEESTSTFKAQQTF. A compositionally biased stretch (polar residues) spans 20 to 29; that stretch reads TSTFKAQQTF. The next 3 membrane-spanning stretches (helical) occupy residues 70–90, 100–120, and 213–233; these read MVLGGLALFGASVVGQGIQWT, AALGGCAAGALIIGAGVGSVI, and ESTLMIAVSPLALVDMAFIAW.

This sequence belongs to the UPF0283 family.

It is found in the cell inner membrane. The chain is UPF0283 membrane protein YcjF from Salmonella arizonae (strain ATCC BAA-731 / CDC346-86 / RSK2980).